The primary structure comprises 101 residues: UPF0235 protein Cpha266_2081 (101 aa).

Belongs to the UPF0235 family.

The polypeptide is UPF0235 protein Cpha266_2081 (Chlorobium phaeobacteroides (strain DSM 266 / SMG 266 / 2430)).